The primary structure comprises 330 residues: Methionyl-tRNA formyltransferase (330 aa).

112 to 115 serves as a coordination point for (6S)-5,6,7,8-tetrahydrofolate; the sequence is SLLP.

The protein belongs to the Fmt family.

It catalyses the reaction L-methionyl-tRNA(fMet) + (6R)-10-formyltetrahydrofolate = N-formyl-L-methionyl-tRNA(fMet) + (6S)-5,6,7,8-tetrahydrofolate + H(+). In terms of biological role, attaches a formyl group to the free amino group of methionyl-tRNA(fMet). The formyl group appears to play a dual role in the initiator identity of N-formylmethionyl-tRNA by promoting its recognition by IF2 and preventing the misappropriation of this tRNA by the elongation apparatus. The polypeptide is Methionyl-tRNA formyltransferase (Synechocystis sp. (strain ATCC 27184 / PCC 6803 / Kazusa)).